The primary structure comprises 440 residues: Collagen alpha-1(XXVI) chain (440 aa).

Residues 1 to 20 (MKLVLLLPWACCCLCGSALA) form the signal peptide. An EMI domain is found at 52–128 (RRHWCHHTVT…PGFTGSNCEE (77 aa)). 3 disulfides stabilise this stretch: C56–C118, C83–C89, and C117–C126. N-linked (GlcNAc...) asparagine glycosylation occurs at N70. Residue N132 is glycosylated (N-linked (GlcNAc...) asparagine). Disordered regions lie at residues 157–362 (EQPS…EGEG) and 390–440 (LASP…GDRK). Residues 199–267 (GPAGPPGQMG…PGPAGSPGLL (69 aa)) form the Collagen-like 1 domain. 3 stretches are compositionally biased toward pro residues: residues 200–215 (PAGPPGQMGPPGPAGP), 231–243 (VGPPGLLGPPGPR), and 252–261 (PGPPGPPGPA). Over residues 269–281 (NTPQGVLYSLQTP) the composition is skewed to polar residues. The Collagen-like 2 domain occupies 302–334 (GIPGPRGPPGPPGPPGPHGPPGPPGAPGSQGLV). Residues 306-327 (PRGPPGPPGPPGPHGPPGPPGA) show a composition bias toward pro residues. The segment covering 347-356 (SVKEEEDKAS) has biased composition (basic and acidic residues).

As to quaternary structure, homotrimer or heterotrimer. In terms of processing, hydroxylated on proline residues. Post-translationally, N-glycosylated. In terms of tissue distribution, specifically expressed in the testis and ovary in adult tissues.

The protein resides in the secreted. It localises to the extracellular space. It is found in the extracellular matrix. This is Collagen alpha-1(XXVI) chain (Col26a1) from Mus musculus (Mouse).